The sequence spans 890 residues: Translation initiation factor IF-2 (890 aa).

Positions 45 to 302 (LIDHLNQKNS…SSLQQGFQKP (258 aa)) are disordered. A compositionally biased stretch (polar residues) spans 67–81 (STLNIPSTGGKSKSV). Residues 92 to 217 (VKRDPQEAER…RMAEENKWTD (126 aa)) are compositionally biased toward basic and acidic residues. Residues 252-266 (GRGRNAKAARPKKGN) are compositionally biased toward basic residues. The segment covering 267–280 (KHAESKADREEARA) has biased composition (basic and acidic residues). The tr-type G domain occupies 389–558 (PRAPVVTIMG…LLQAEVLELK (170 aa)). The interval 398–405 (GHVDHGKT) is G1. 398-405 (GHVDHGKT) provides a ligand contact to GTP. The segment at 423–427 (GITQH) is G2. The G3 stretch occupies residues 444–447 (DTPG). GTP is bound by residues 444–448 (DTPGH) and 498–501 (NKID). Positions 498-501 (NKID) are G4. The tract at residues 534–536 (SAK) is G5. Lys808 carries the post-translational modification N6-acetyllysine.

Belongs to the TRAFAC class translation factor GTPase superfamily. Classic translation factor GTPase family. IF-2 subfamily.

The protein resides in the cytoplasm. Functionally, one of the essential components for the initiation of protein synthesis. Protects formylmethionyl-tRNA from spontaneous hydrolysis and promotes its binding to the 30S ribosomal subunits. Also involved in the hydrolysis of GTP during the formation of the 70S ribosomal complex. This Shigella dysenteriae serotype 1 (strain Sd197) protein is Translation initiation factor IF-2.